Here is a 682-residue protein sequence, read N- to C-terminus: 1,4-alpha-glucan-branching enzyme (682 aa).

2 residues coordinate (1,4-alpha-D-glucosyl)n: W88 and K124. D342 acts as the Nucleophile in catalysis. E397 functions as the Proton donor in the catalytic mechanism.

It belongs to the glycosyl hydrolase 13 family. GlgB subfamily.

The protein resides in the cytoplasm. It catalyses the reaction Transfers a segment of a (1-&gt;4)-alpha-D-glucan chain to a primary hydroxy group in a similar glucan chain.. The protein operates within glycan biosynthesis; glycogen biosynthesis. Functionally, glycogen-branching enzyme participates in the glycogen biosynthetic process along with glycogenin and glycogen synthase. Generates alpha-1,6-glucosidic branches from alpha-1,4-linked glucose chains, to increase solubility of the glycogen polymer. The sequence is that of 1,4-alpha-glucan-branching enzyme (GLC3) from Cryptococcus neoformans var. neoformans serotype D (strain B-3501A) (Filobasidiella neoformans).